The sequence spans 48 residues: ATP synthase protein 8 (48 aa).

A helical transmembrane segment spans residues 4–24; that stretch reads LVPFYFINILSFGFLIFTVLL.

It belongs to the ATPase protein 8 family. As to quaternary structure, F-type ATPases have 2 components, CF(1) - the catalytic core - and CF(0) - the membrane proton channel.

The protein localises to the mitochondrion membrane. In terms of biological role, mitochondrial membrane ATP synthase (F(1)F(0) ATP synthase or Complex V) produces ATP from ADP in the presence of a proton gradient across the membrane which is generated by electron transport complexes of the respiratory chain. F-type ATPases consist of two structural domains, F(1) - containing the extramembraneous catalytic core and F(0) - containing the membrane proton channel, linked together by a central stalk and a peripheral stalk. During catalysis, ATP synthesis in the catalytic domain of F(1) is coupled via a rotary mechanism of the central stalk subunits to proton translocation. Part of the complex F(0) domain. Minor subunit located with subunit a in the membrane. The protein is ATP synthase protein 8 (atp8) of Schizosaccharomyces pombe (strain 972 / ATCC 24843) (Fission yeast).